The following is a 431-amino-acid chain: 3-phosphoshikimate 1-carboxyvinyltransferase (431 aa).

3-phosphoshikimate-binding residues include K21, S22, and R26. K21 contributes to the phosphoenolpyruvate binding site. Phosphoenolpyruvate-binding residues include G93 and R121. S166, Q168, D318, and K345 together coordinate 3-phosphoshikimate. Position 168 (Q168) interacts with phosphoenolpyruvate. D318 functions as the Proton acceptor in the catalytic mechanism. Phosphoenolpyruvate-binding residues include R349 and R391.

The protein belongs to the EPSP synthase family. Monomer.

It localises to the cytoplasm. The enzyme catalyses 3-phosphoshikimate + phosphoenolpyruvate = 5-O-(1-carboxyvinyl)-3-phosphoshikimate + phosphate. It participates in metabolic intermediate biosynthesis; chorismate biosynthesis; chorismate from D-erythrose 4-phosphate and phosphoenolpyruvate: step 6/7. Functionally, catalyzes the transfer of the enolpyruvyl moiety of phosphoenolpyruvate (PEP) to the 5-hydroxyl of shikimate-3-phosphate (S3P) to produce enolpyruvyl shikimate-3-phosphate and inorganic phosphate. This chain is 3-phosphoshikimate 1-carboxyvinyltransferase, found in Sulfurihydrogenibium sp. (strain YO3AOP1).